The sequence spans 354 residues: Serine/threonine-protein phosphatase 2A activator 2 (354 aa).

Belongs to the PTPA-type PPIase family.

Its subcellular location is the cytoplasm. It carries out the reaction [protein]-peptidylproline (omega=180) = [protein]-peptidylproline (omega=0). Functionally, PPIases accelerate the folding of proteins. It catalyzes the cis-trans isomerization of proline imidic peptide bonds in oligopeptides. Acts as a regulatory subunit for PP2A-like phosphatases modulating their activity or substrate specificity, probably by inducing a conformational change in the catalytic subunit, a direct target of the PPIase. Can reactivate inactive phosphatase PP2A-phosphatase methylesterase complexes (PP2Ai) in presence of ATP and Mg(2+) by dissociating the inactive form from the complex. The chain is Serine/threonine-protein phosphatase 2A activator 2 (RRD2) from Yarrowia lipolytica (strain CLIB 122 / E 150) (Yeast).